Consider the following 299-residue polypeptide: Taste receptor type 2 member 50 (299 aa).

A topological domain (extracellular) is located at residue Met-1. The helical transmembrane segment at 2–22 (VTFLHIFFSILILVLFVLGNF) threads the bilayer. Over 23-55 (ANGFIALVNFIDLVKRKKISSADQILTALAVSR) the chain is Cytoplasmic. Residues 56-76 (IGLLWALLLNWYLTVLNPAFY) form a helical membrane-spanning segment. Residues 77–87 (SVELRITSYNA) lie on the Extracellular side of the membrane. A helical transmembrane segment spans residues 88-108 (WVVTNHFSMWLAASLSIFYLL). Topologically, residues 109–126 (KIANFSNLIFLHLKRRVR) are cytoplasmic. The helical transmembrane segment at 127–147 (SVILVILLGPLTFLVCHLFVA) threads the bilayer. The Extracellular segment spans residues 148-181 (NMDESMSAEEYEGNMTGKLKLRNTVHLSYLTVTT). A glycan (N-linked (GlcNAc...) asparagine) is linked at Asn-161. A helical membrane pass occupies residues 182–202 (LWSFIPFTLSLISFLMLICSL). Over 203–229 (CKHVKKMQLHGEGSQDLSTKVHIKALQ) the chain is Cytoplasmic. A helical transmembrane segment spans residues 230–250 (TLISFLLLCAIFFLFLIISIW). At 251–259 (NPRRLQNDP) the chain is on the extracellular side. The chain crosses the membrane as a helical span at residues 260 to 280 (VVVVSKAVGNIYLALDSFILI). The Cytoplasmic portion of the chain corresponds to 281 to 299 (WRTKKLKHTFLLILCQIRC).

It belongs to the G-protein coupled receptor T2R family.

Its subcellular location is the membrane. Receptor that may play a role in the perception of bitterness and is gustducin-linked. May play a role in sensing the chemical composition of the gastrointestinal content. The activity of this receptor may stimulate alpha gustducin, mediate PLC-beta-2 activation and lead to the gating of TRPM5. The polypeptide is Taste receptor type 2 member 50 (TAS2R50) (Pongo pygmaeus (Bornean orangutan)).